We begin with the raw amino-acid sequence, 310 residues long: tRNA pseudouridine synthase B (310 aa).

Residue Asp-37 is the Nucleophile of the active site.

Belongs to the pseudouridine synthase TruB family. Type 1 subfamily.

It catalyses the reaction uridine(55) in tRNA = pseudouridine(55) in tRNA. Responsible for synthesis of pseudouridine from uracil-55 in the psi GC loop of transfer RNAs. The protein is tRNA pseudouridine synthase B of Deinococcus deserti (strain DSM 17065 / CIP 109153 / LMG 22923 / VCD115).